Consider the following 201-residue polypeptide: Large ribosomal subunit protein bL25 (201 aa).

Positions 179–201 (VSITAPRVEAEKTEEEEPESTEE) are disordered. A compositionally biased stretch (acidic residues) spans 190-201 (KTEEEEPESTEE).

It belongs to the bacterial ribosomal protein bL25 family. CTC subfamily. Part of the 50S ribosomal subunit; part of the 5S rRNA/L5/L18/L25 subcomplex. Contacts the 5S rRNA. Binds to the 5S rRNA independently of L5 and L18.

Functionally, this is one of the proteins that binds to the 5S RNA in the ribosome where it forms part of the central protuberance. In Prosthecochloris aestuarii (strain DSM 271 / SK 413), this protein is Large ribosomal subunit protein bL25.